The sequence spans 93 residues: DNA-directed RNA polymerase subunit omega (93 aa).

This sequence belongs to the RNA polymerase subunit omega family. The RNAP catalytic core consists of 2 alpha, 1 beta, 1 beta' and 1 omega subunit. When a sigma factor is associated with the core the holoenzyme is formed, which can initiate transcription.

It carries out the reaction RNA(n) + a ribonucleoside 5'-triphosphate = RNA(n+1) + diphosphate. Functionally, promotes RNA polymerase assembly. Latches the N- and C-terminal regions of the beta' subunit thereby facilitating its interaction with the beta and alpha subunits. The protein is DNA-directed RNA polymerase subunit omega of Corynebacterium urealyticum (strain ATCC 43042 / DSM 7109).